The primary structure comprises 416 residues: Multifunctional CCA protein (416 aa).

The ATP site is built by glycine 8 and arginine 11. Residues glycine 8 and arginine 11 each coordinate CTP. The Mg(2+) site is built by aspartate 21 and aspartate 23. Residues arginine 91, arginine 137, and arginine 140 each coordinate ATP. Positions 91, 137, and 140 each coordinate CTP. In terms of domain architecture, HD spans 228-329 (TGVHTLMVLA…VKIFDKADFW (102 aa)).

Belongs to the tRNA nucleotidyltransferase/poly(A) polymerase family. Bacterial CCA-adding enzyme type 1 subfamily. In terms of assembly, monomer. Can also form homodimers and oligomers. Requires Mg(2+) as cofactor. Ni(2+) serves as cofactor.

The enzyme catalyses a tRNA precursor + 2 CTP + ATP = a tRNA with a 3' CCA end + 3 diphosphate. It catalyses the reaction a tRNA with a 3' CCA end + 2 CTP + ATP = a tRNA with a 3' CCACCA end + 3 diphosphate. Catalyzes the addition and repair of the essential 3'-terminal CCA sequence in tRNAs without using a nucleic acid template. Adds these three nucleotides in the order of C, C, and A to the tRNA nucleotide-73, using CTP and ATP as substrates and producing inorganic pyrophosphate. tRNA 3'-terminal CCA addition is required both for tRNA processing and repair. Also involved in tRNA surveillance by mediating tandem CCA addition to generate a CCACCA at the 3' terminus of unstable tRNAs. While stable tRNAs receive only 3'-terminal CCA, unstable tRNAs are marked with CCACCA and rapidly degraded. The protein is Multifunctional CCA protein of Shewanella baltica (strain OS185).